We begin with the raw amino-acid sequence, 663 residues long: Pyoverdine export ATP-binding/permease protein PvdT (663 aa).

Residues 11 to 250 (IELRDIRKRY…PSAGVERHLQ (240 aa)) enclose the ABC transporter domain. Residue 48–55 (GASGSGKS) participates in ATP binding. The next 4 membrane-spanning stretches (helical) occupy residues 292 to 312 (ALTL…LAVG), 545 to 565 (IAAI…LMTV), 598 to 618 (VVGG…LLLG), and 626 to 646 (LSAI…FGFM).

It belongs to the ABC transporter superfamily. Macrolide exporter (TC 3.A.1.122) family. As to quaternary structure, part of the tripartite efflux system PvdRT-OpmQ, which is composed of an inner membrane component with both ATPase and permease domains, PvdT, a periplasmic membrane fusion protein, PvdR, and an outer membrane component, OpmQ.

The protein localises to the cell inner membrane. In terms of biological role, part of the tripartite efflux system PvdRT-OpmQ required for the secretion into the extracellular milieu of the siderophore pyoverdine (PVD), which is involved in iron acquisition. This subunit binds PVD and drives its secretion by hydrolyzing ATP. The system is responsible for export of newly synthesized PVD after the final steps of biosynthesis have taken place in the periplasm. It is also responsible for recycling of PVD after internalization of ferri-PVD into the periplasm by the outer-membrane receptor FpvA and release of iron from PVD, thus making PVD available for new cycles of iron uptake. In addition, can expel unwanted metals complexed with PVD from the periplasm into the extracellular medium. The chain is Pyoverdine export ATP-binding/permease protein PvdT from Pseudomonas aeruginosa (strain ATCC 15692 / DSM 22644 / CIP 104116 / JCM 14847 / LMG 12228 / 1C / PRS 101 / PAO1).